A 364-amino-acid chain; its full sequence is Programmed cell death protein 2-like (364 aa).

A2 carries the post-translational modification N-acetylalanine. Residues 125–150 (EGSQDWGSDTEETPPPPASDLGSDSN) are disordered.

Over-expression suppresses AP1, CREB, NFAT, and NF-kB transcriptional activation, and delays cell cycle progression at S phase. The polypeptide is Programmed cell death protein 2-like (Pdcd2l) (Mus musculus (Mouse)).